Reading from the N-terminus, the 440-residue chain is Histidinol dehydrogenase (440 aa).

NAD(+) is bound by residues Tyr-139, Gln-200, and Asn-223. Ser-246, Gln-268, and His-271 together coordinate substrate. Zn(2+)-binding residues include Gln-268 and His-271. Active-site proton acceptor residues include Glu-336 and His-337. Residues His-337, Asp-370, Glu-424, and His-429 each coordinate substrate. Residue Asp-370 participates in Zn(2+) binding. A Zn(2+)-binding site is contributed by His-429.

It belongs to the histidinol dehydrogenase family. Zn(2+) is required as a cofactor.

It catalyses the reaction L-histidinol + 2 NAD(+) + H2O = L-histidine + 2 NADH + 3 H(+). It participates in amino-acid biosynthesis; L-histidine biosynthesis; L-histidine from 5-phospho-alpha-D-ribose 1-diphosphate: step 9/9. Functionally, catalyzes the sequential NAD-dependent oxidations of L-histidinol to L-histidinaldehyde and then to L-histidine. The protein is Histidinol dehydrogenase of Bordetella bronchiseptica (strain ATCC BAA-588 / NCTC 13252 / RB50) (Alcaligenes bronchisepticus).